The following is a 229-amino-acid chain: Large ribosomal subunit protein uL1 (229 aa).

Belongs to the universal ribosomal protein uL1 family. In terms of assembly, part of the 50S ribosomal subunit.

Functionally, binds directly to 23S rRNA. The L1 stalk is quite mobile in the ribosome, and is involved in E site tRNA release. Protein L1 is also a translational repressor protein, it controls the translation of the L11 operon by binding to its mRNA. The chain is Large ribosomal subunit protein uL1 from Caulobacter sp. (strain K31).